The primary structure comprises 686 residues: NADH-ubiquinone oxidoreductase chain 5 (686 aa).

17 consecutive transmembrane segments (helical) span residues 3-23 (LIIL…GRFV), 40-60 (ALLS…LFSF), 101-121 (ITLP…LFSV), 139-159 (LFTF…LFVG), 160-180 (WEGI…RIQA), 198-218 (LSIA…STVF), 222-242 (AYIN…GAMA), 261-281 (TPVS…YLLI), 293-313 (VLLV…TCGL), 321-341 (IIAF…GLSQ), 350-370 (LFHA…IHAF), 382-402 (LINF…SLLA), 432-452 (ILGS…ISLV), 472-492 (ITVI…GYVT), 526-546 (LIFK…ALYL), 635-655 (ALYI…PMLV), and 665-685 (LIIL…KKLS).

It belongs to the complex I subunit 5 family.

It localises to the mitochondrion inner membrane. The enzyme catalyses a ubiquinone + NADH + 5 H(+)(in) = a ubiquinol + NAD(+) + 4 H(+)(out). Core subunit of the mitochondrial membrane respiratory chain NADH dehydrogenase (Complex I) that is believed to belong to the minimal assembly required for catalysis. Complex I functions in the transfer of electrons from NADH to the respiratory chain. The immediate electron acceptor for the enzyme is believed to be ubiquinone. The protein is NADH-ubiquinone oxidoreductase chain 5 (ND5) of Schizophyllum commune (Split gill fungus).